The chain runs to 390 residues: Putative glutamate--cysteine ligase 2 (390 aa).

It belongs to the glutamate--cysteine ligase type 2 family. YbdK subfamily.

The catalysed reaction is L-cysteine + L-glutamate + ATP = gamma-L-glutamyl-L-cysteine + ADP + phosphate + H(+). ATP-dependent carboxylate-amine ligase which exhibits weak glutamate--cysteine ligase activity. The polypeptide is Putative glutamate--cysteine ligase 2 (Chloroflexus aurantiacus (strain ATCC 29366 / DSM 635 / J-10-fl)).